A 267-amino-acid chain; its full sequence is MILWRIVRPGAAMAYVQTGLVLIAEAMDTQQDSLKPRPAMRAAAFSVHVFTAFGAAIALLAMLEAVREHWAAMFQWLGVALIIDAIDGPIARRLDVKNVQPNWSGDVLDLVVDFVTYVFVPAYAIVASGLLLPVAAPLLGVAIIVTSALYFADLRMKADDNHFRGFPALWNAAAFYLFLLHWPPLWSTLLVAALVVLTFVPFHVLHPVRVVRLRWLTMSLIGIWAVLSLYTLDMDFRVGPGVTLALCAIALWISFSDALIRFARSFA.

Residues 1–42 lie on the Cytoplasmic side of the membrane; the sequence is MILWRIVRPGAAMAYVQTGLVLIAEAMDTQQDSLKPRPAMRA. Residues 43-63 form a helical membrane-spanning segment; sequence AAFSVHVFTAFGAAIALLAML. Residues 64-69 are Periplasmic-facing; that stretch reads EAVREH. A helical membrane pass occupies residues 70–90; that stretch reads WAAMFQWLGVALIIDAIDGPI. Topologically, residues 91-102 are cytoplasmic; the sequence is ARRLDVKNVQPN. The helical transmembrane segment at 103–123 threads the bilayer; it reads WSGDVLDLVVDFVTYVFVPAY. Alanine 124 is a topological domain (periplasmic). The chain crosses the membrane as a helical span at residues 125–145; that stretch reads IVASGLLLPVAAPLLGVAIIV. Residues 146–162 lie on the Cytoplasmic side of the membrane; it reads TSALYFADLRMKADDNH. The chain crosses the membrane as a helical span at residues 163–183; it reads FRGFPALWNAAAFYLFLLHWP. A topological domain (periplasmic) is located at residue proline 184. The helical transmembrane segment at 185–205 threads the bilayer; sequence LWSTLLVAALVVLTFVPFHVL. Residues 206 to 215 lie on the Cytoplasmic side of the membrane; that stretch reads HPVRVVRLRW. Residues 216–236 traverse the membrane as a helical segment; that stretch reads LTMSLIGIWAVLSLYTLDMDF. Over 237–239 the chain is Periplasmic; it reads RVG. The chain crosses the membrane as a helical span at residues 240–260; it reads PGVTLALCAIALWISFSDALI. Over 261 to 267 the chain is Cytoplasmic; that stretch reads RFARSFA.

Belongs to the CDP-alcohol phosphatidyltransferase class-I family. Requires Mn(2+) as cofactor.

It localises to the cell inner membrane. It catalyses the reaction a CDP-1,2-diacyl-sn-glycerol + choline = a 1,2-diacyl-sn-glycero-3-phosphocholine + CMP + H(+). Condenses choline with CDP-diglyceride to produce phosphatidylcholine and CMP. The protein is Phosphatidylcholine synthase of Bradyrhizobium diazoefficiens (strain JCM 10833 / BCRC 13528 / IAM 13628 / NBRC 14792 / USDA 110).